The sequence spans 289 residues: Survival motor neuron protein (289 aa).

Residues 1–10 (MAMGSGGGAG) are compositionally biased toward gly residues. The disordered stretch occupies residues 1-27 (MAMGSGGGAGSEQEDTVLFRRGTGQSD). Residues 11-42 (SEQEDTVLFRRGTGQSDDSDIWDDTALIKAYD) are P1 (binding site for GEMIN2). Thr-23 is modified (phosphothreonine). Residues Ser-26 and Ser-29 each carry the phosphoserine modification. Residue Lys-49 forms a Glycyl lysine isopeptide (Lys-Gly) (interchain with G-Cter in SUMO2) linkage. Residues 55-88 (GDMCETSDKPKGTARRKPAKKNKNQKKNATAPLK) are disordered. Positions 66–80 (GTARRKPAKKNKNQK) are enriched in basic residues. Thr-67 is modified (phosphothreonine). In terms of domain architecture, Tudor spans 89 to 149 (QWKAGDKCSA…LSPTCEVANN (61 aa)). The interval 95–205 (KCSAVWSEDG…VPGAGLGPGK (111 aa)) is required for interaction with RPP20/POP7. The segment at 150–226 (TEQNTQENES…PPPPPPFLPC (77 aa)) is disordered. Over residues 171–181 (RSLRSKAHSKS) the composition is skewed to basic residues. Residue Lys-205 forms a Glycyl lysine isopeptide (Lys-Gly) (interchain with G-Cter in SUMO2) linkage. Residues 212-226 (GPPPPPPPPPPFLPC) are compositionally biased toward pro residues. A P2 (binding site for SM B) region spans residues 235–262 (PPIIPPPPPISPDCLDDTDALGSMLISW). Positions 274 to 289 (GFRQNKKEGKKCSHTN) are required for interaction with SYNCRIP.

It belongs to the SMN family. As to quaternary structure, homooligomer; may form higher order homooligomers in the dimer to octamer range. Part of the core SMN complex that contains SMN1, GEMIN2/SIP1, DDX20/GEMIN3, GEMIN4, GEMIN5, GEMIN6, GEMIN7, GEMIN8 and STRAP/UNRIP. Part of the SMN-Sm complex that contains SMN1, GEMIN2/SIP1, DDX20/GEMIN3, GEMIN4, GEMIN5, GEMIN6, GEMIN7, GEMIN8, STRAP/UNRIP and the Sm proteins SNRPB, SNRPD1, SNRPD2, SNRPD3, SNRPE, SNRPF and SNRPG. Component of an import snRNP complex composed of KPNB1, RNUT1, SMN1 and ZNF259. Interacts with DDX20, FBL, NOLA1, RNUT1 and with several spliceosomal snRNP core Sm proteins, including SNRPB, SNRPD1, SNRPD2, SNRPD3, SNRPE and ILF3. Interacts with GEMIN2; the interaction is direct. Interacts with GEMIN3; the interaction is direct. Interacts with GEMIN8; the interaction is direct. Interacts with SNRPB; the interaction is direct. Interacts (via Tudor domain) with SNRPD1 (via C-terminus); the interaction is direct. Interacts with SNRPD2; the interaction is direct. Interacts (via Tudor domain) with SNRPD3 (via C-terminus); the interaction is direct. Interacts with SNRPE; the interaction is direct. Interacts with OSTF1, LSM10, LSM11 and RPP20/POP7. Interacts (via C-terminal region) with ZPR1 (via C-terminal region). Interacts (via Tudor domain) with COIL. Interacts with SETX; recruits SETX to POLR2A. Interacts with POLR2A (via the C-terminal domain (CTD)). Interacts with PRMT5. Interacts with XRN2. Interacts (via C-terminus) with FMR1 (via C-terminus); the interaction is direct and occurs in a RNA-independent manner. Interacts with SYNCRIP. Interacts (via Tudor domain) with SF3B2 (methylated form). Interacts with WRAP53/TCAB1. Interacts (via Tudor domain) with ELAVL4 in an RNA-independent manner; the interaction is required for localization of ELAVL4 to RNA granules. Interacts with FRG1.

It localises to the nucleus. The protein localises to the gem. It is found in the cajal body. The protein resides in the cytoplasm. Its subcellular location is the cytoplasmic granule. It localises to the perikaryon. The protein localises to the cell projection. It is found in the neuron projection. The protein resides in the axon. Its subcellular location is the myofibril. It localises to the sarcomere. The protein localises to the z line. Functionally, the SMN complex catalyzes the assembly of small nuclear ribonucleoproteins (snRNPs), the building blocks of the spliceosome, and thereby plays an important role in the splicing of cellular pre-mRNAs. Most spliceosomal snRNPs contain a common set of Sm proteins SNRPB, SNRPD1, SNRPD2, SNRPD3, SNRPE, SNRPF and SNRPG that assemble in a heptameric protein ring on the Sm site of the small nuclear RNA to form the core snRNP (Sm core). In the cytosol, the Sm proteins SNRPD1, SNRPD2, SNRPE, SNRPF and SNRPG are trapped in an inactive 6S pICln-Sm complex by the chaperone CLNS1A that controls the assembly of the core snRNP. To assemble core snRNPs, the SMN complex accepts the trapped 5Sm proteins from CLNS1A forming an intermediate. Binding of snRNA inside 5Sm ultimately triggers eviction of the SMN complex, thereby allowing binding of SNRPD3 and SNRPB to complete assembly of the core snRNP. Within the SMN complex, SMN1 acts as a structural backbone and together with GEMIN2 it gathers the Sm complex subunits. Ensures the correct splicing of U12 intron-containing genes that may be important for normal motor and proprioceptive neurons development. Also required for resolving RNA-DNA hybrids created by RNA polymerase II, that form R-loop in transcription terminal regions, an important step in proper transcription termination. May also play a role in the metabolism of small nucleolar ribonucleoprotein (snoRNPs). This is Survival motor neuron protein (Smn1) from Rattus norvegicus (Rat).